Reading from the N-terminus, the 304-residue chain is Small glutamine-rich tetratricopeptide repeat-containing protein beta (304 aa).

4 TPR repeats span residues 15 to 49 (LREQSQMDAYTSDEQESLEVAIQCLETVFKISPED), 85 to 118 (ADQLKDEGNNHMKEENYAAAVDCYTQAIELDPNN), 120 to 152 (VYYCNRAAAQSKLSHYTDAIKDCEKAIAIDSKY), and 153 to 186 (SKAYGRMGLALTAMNKFEEAVTSYQKALDLDPEN). K131 is subject to N6-acetyllysine. A phosphoserine mark is found at S293, S295, and S297.

The protein belongs to the SGT family. Homooligomerize. Expressed specifically in brain.

In terms of biological role, co-chaperone that binds directly to HSC70 and HSP70 and regulates their ATPase activity. The polypeptide is Small glutamine-rich tetratricopeptide repeat-containing protein beta (Sgtb) (Rattus norvegicus (Rat)).